Reading from the N-terminus, the 252-residue chain is MTEPILKVNDLSVYYGKKKALHSVSIDFYPNEITSLIGPSGSGKSTLLRAINRMGDLNPEVTVTGSIIYNGHNIYSRRTDTVELRKEIGMVFQQPNPFPMTIYENVVYGLRLKGVKDKKILDEAVEKSLVGASIWDEVKDRLHDSAIGLSGGQQQRVCIARVLATSPKIILLDEPTSALDPISAGKIEDTLYGLKEKYTMLVVTRSMQQASRISNRTGFFLAGDLVEYGNTKEMFMNPQKQETEDYITGKFG.

The ABC transporter domain maps to 6 to 247; it reads LKVNDLSVYY…PQKQETEDYI (242 aa). 38-45 serves as a coordination point for ATP; sequence GPSGSGKS.

This sequence belongs to the ABC transporter superfamily. Phosphate importer (TC 3.A.1.7) family. The complex is composed of two ATP-binding proteins (PstB), two transmembrane proteins (PstC and PstA) and a solute-binding protein (PstS).

It is found in the cell membrane. The enzyme catalyses phosphate(out) + ATP + H2O = ADP + 2 phosphate(in) + H(+). Functionally, part of the ABC transporter complex PstSACB involved in phosphate import. Responsible for energy coupling to the transport system. The polypeptide is Phosphate import ATP-binding protein PstB 1 (Streptococcus mutans serotype c (strain ATCC 700610 / UA159)).